The primary structure comprises 1905 residues: Microtubule cross-linking factor 1 (1905 aa).

The necessary for colocalization and binding with microtubules stretch occupies residues 1–249 (METLNGPAGG…SSDREPPRGA (249 aa)). The disordered stretch occupies residues 1–329 (METLNGPAGG…SLGEQSRLVP (329 aa)). The segment at 1-508 (METLNGPAGG…QDDSADLRCQ (508 aa)) is necessary for self-assembly, microtubule bundling activity and apicobasal microtubule organization. A compositionally biased stretch (basic residues) spans 22 to 40 (QHHRHHHLHPVAERRRLHR). Low complexity-rich tracts occupy residues 63–95 (VPSSGRAPAPAAPRSPNLAGKAPPSPGSLAAPG) and 115–130 (AGARAAGGAKAALGSR). 2 positions are modified to phosphoserine: S77 and S87. A phosphoserine mark is found at S217, S221, and S263. Over residues 268–283 (ALLAAPLAAGACPGGR) the composition is skewed to low complexity. Coiled-coil stretches lie at residues 330–404 (AAEE…EQKS), 432–483 (SVRL…SSLK), and 513–718 (KEEA…LQHE). Disordered stretches follow at residues 544 to 563 (YGDVDSPLPTGEAGGPPSTR), 601 to 631 (DMRGQQEREGPGRDHAPSIPTSPFGDSLESS), 671 to 694 (FEPPREPGWLGEGASPGAGGGAPL), 737 to 800 (LRAP…SEPC), and 842 to 867 (AGLRGGAPLPGPGLQGEEEQGEGDQQ). S549 is modified (phosphoserine). Residues 601–616 (DMRGQQEREGPGRDHA) are compositionally biased toward basic and acidic residues. S618 bears the Phosphoserine mark. T621 bears the Phosphothreonine mark. Gly residues predominate over residues 680 to 692 (LGEGASPGAGGGA). S685 carries the post-translational modification Phosphoserine. The span at 741–770 (SPRDSDAESDAGKKESDGEESRLPQPKREG) shows a compositional bias: basic and acidic residues. S776 is subject to Phosphoserine. Acidic residues predominate over residues 857-866 (GEEEQGEGDQ). Phosphoserine occurs at positions 901, 923, 941, and 975. The tract at residues 1080 to 1100 (GVQGGHQADGPDHDSDRGCGF) is disordered. Coiled-coil stretches lie at residues 1143–1201 (KALL…ELGS) and 1238–1278 (EKNW…KENS). The interval 1265 to 1382 (EFLWRIEQLQ…EENHKGNLQR (118 aa)) is necessary for interaction with MARK2 and apicobasal microtubule bundle formation in polarized epithelial cells. The residue at position 1278 (S1278) is a Phosphoserine. Residues 1346 to 1384 (ALSLDDEPEEPPAHRPEREFRNRLPEEEENHKGNLQRAV) are disordered. Basic and acidic residues predominate over residues 1356 to 1377 (PPAHRPEREFRNRLPEEEENHK). S1385, S1388, and S1399 each carry phosphoserine. A Phosphothreonine modification is found at T1417. S1421 is modified (phosphoserine). Residue Y1427 is modified to Phosphotyrosine. Residues 1485–1505 (DTMTSPEHCQKQPLRSHVLTE) are disordered. A phosphoserine mark is found at S1514, S1523, S1561, S1578, S1583, S1592, and S1661. Residues 1524 to 1569 (ITAAGGEGPFPTSRARGSPGDTKGGPPEPMLSRWPCTSPRHSRDYV) are disordered. Disordered stretches follow at residues 1655 to 1689 (GSGVTSSPHKCLTPKAGGGATPVSSPSRSLRSRQV), 1707 to 1756 (PKYG…PVHT), 1782 to 1842 (GLRA…APPG), and 1863 to 1905 (KEER…PWGL). A phosphothreonine mark is found at T1667 and T1675. Residues 1678–1687 (SSPSRSLRSR) are compositionally biased toward low complexity. The segment at 1678–1773 (SSPSRSLRSR…SLFNIIDHSP (96 aa)) is necessary for colocalization and binding with microtubules. A phosphoserine mark is found at S1679 and S1683. Positions 1744 to 1756 (ARSTTTRESPVHT) are enriched in polar residues. A phosphoserine mark is found at S1791, S1808, S1812, and S1814.

It belongs to the SOGA family. As to quaternary structure, homodimer. Associates (via N- and C-terminus domains) with microtubule filaments. In terms of assembly, interacts with MARK2; the interaction is direct. Phosphorylated during mitosis in a CDK1-dependent manner.

It localises to the lateral cell membrane. The protein resides in the apical cell membrane. Its subcellular location is the cytoplasm. It is found in the cytoskeleton. The protein localises to the spindle pole. It localises to the midbody. In terms of biological role, microtubule-associated factor involved in the late phase of epithelial polarization and microtubule dynamics regulation. Plays a role in the development and maintenance of non-centrosomal microtubule bundles at the lateral membrane in polarized epithelial cells. Required for faithful chromosome segregation during mitosis. This chain is Microtubule cross-linking factor 1 (MTCL1), found in Homo sapiens (Human).